Reading from the N-terminus, the 305-residue chain is UDP-3-O-acyl-N-acetylglucosamine deacetylase (305 aa).

His-79, His-238, and Asp-242 together coordinate Zn(2+). His-265 acts as the Proton donor in catalysis.

The protein belongs to the LpxC family. It depends on Zn(2+) as a cofactor.

The catalysed reaction is a UDP-3-O-[(3R)-3-hydroxyacyl]-N-acetyl-alpha-D-glucosamine + H2O = a UDP-3-O-[(3R)-3-hydroxyacyl]-alpha-D-glucosamine + acetate. The protein operates within glycolipid biosynthesis; lipid IV(A) biosynthesis; lipid IV(A) from (3R)-3-hydroxytetradecanoyl-[acyl-carrier-protein] and UDP-N-acetyl-alpha-D-glucosamine: step 2/6. Catalyzes the hydrolysis of UDP-3-O-myristoyl-N-acetylglucosamine to form UDP-3-O-myristoylglucosamine and acetate, the committed step in lipid A biosynthesis. The polypeptide is UDP-3-O-acyl-N-acetylglucosamine deacetylase (Pasteurella multocida (strain Pm70)).